Consider the following 183-residue polypeptide: Neuronal synaptobrevin (183 aa).

Low complexity predominate over residues 1–17 (MADAAPAGDAPPNAGAP). Positions 1–32 (MADAAPAGDAPPNAGAPAGEGGDGEIVGGPHN) are disordered. At 1–106 (MADAAPAGDA…KFWLQNLKMM (106 aa)) the chain is on the cytoplasmic side. Residues 18–27 (AGEGGDGEIV) show a composition bias toward gly residues. Positions 41–101 (RLQQTQAQVD…GKLKRKFWLQ (61 aa)) constitute a v-SNARE coiled-coil homology domain. The helical transmembrane segment at 107–127 (IIMGVIGLVVVGIIANKLGLI) threads the bilayer. The Vesicular portion of the chain corresponds to 128–183 (GGEQPPQYQYPPQYMQPPPPPPQQPAGGQSSLVDAAGAGDGAGAGGSAGAGDHGGV). Residues 135 to 183 (YQYPPQYMQPPPPPPQQPAGGQSSLVDAAGAGDGAGAGGSAGAGDHGGV) are disordered. Residues 141–151 (YMQPPPPPPQQ) are compositionally biased toward pro residues. A compositionally biased stretch (gly residues) spans 165-183 (AGDGAGAGGSAGAGDHGGV).

This sequence belongs to the synaptobrevin family. Part of the SNARE core complex containing Snap25 and syntaxin. As to expression, specifically expressed in neurons and synapses.

It localises to the cytoplasmic vesicle. The protein resides in the secretory vesicle. Its subcellular location is the synaptic vesicle membrane. It is found in the early endosome membrane. Involved in the targeting and/or fusion of transport vesicles to their target membrane. Major SNARE protein of synaptic vesicles which mediates fusion of synaptic vesicles to release neurotransmitters. Essential for fast vesicular exocytosis and activity-dependent neurotransmitter release as well as fast endocytosis that mediates rapid reuse of synaptic vesicles. Also involved in a neuron-specific sort-and-degrade mechanism that promotes endolysosomal degradation and is required for neuronal maintenance. The polypeptide is Neuronal synaptobrevin (Drosophila melanogaster (Fruit fly)).